A 1327-amino-acid chain; its full sequence is Putative ATP-dependent RNA helicase ucp12 (1327 aa).

2 disordered regions span residues 1–58 and 201–222; these read MGSK…KQLV and QAAR…NEKV. Residues 18–41 are compositionally biased toward basic and acidic residues; it reads SKNKEKNIKGKKKNSLDPIEKNKQ. Polar residues predominate over residues 42–58; that stretch reads ETAGLQTTSRPTAKQLV. Residues 276-315 enclose the UBA domain; sequence EPDTSIVNDLISLGFRDIHAKEACQYCVSLEDALEWLIIH. The RWD domain occupies 405–504; the sequence is DDVSALQSIL…NHLQENIEDF (100 aa). Residues 587–756 form the Helicase ATP-binding domain; that stretch reads MDAIQHSQVV…FGNAGHLHIH (170 aa). Residue 600-607 participates in ATP binding; the sequence is GETGSGKS. The short motif at 703 to 706 is the DEAH box element; sequence DEVH. The 172-residue stretch at 797-968 folds into the Helicase C-terminal domain; it reads LISRLVSSID…QVCLNVVPLV (172 aa).

It belongs to the DEAD box helicase family. DEAH subfamily.

It is found in the cytoplasm. The catalysed reaction is ATP + H2O = ADP + phosphate + H(+). Probable ATP-binding RNA helicase. This chain is Putative ATP-dependent RNA helicase ucp12 (ucp12), found in Schizosaccharomyces pombe (strain 972 / ATCC 24843) (Fission yeast).